A 244-amino-acid polypeptide reads, in one-letter code: HTH-type transcriptional repressor PhnF (244 aa).

The region spanning 8–74 is the HTH gntR-type domain; sequence RILKHQVVRA…RGRTTVVARP (67 aa). Residues 35–54 constitute a DNA-binding region (H-T-H motif); it reads EREIAEQFEVARETVRQALR.

The protein localises to the cytoplasm. Its function is as follows. Represses the phnDCE operon, involved in the uptake of phosphate, under conditions of phosphate availability in the cell. The sequence is that of HTH-type transcriptional repressor PhnF (phnF) from Mycolicibacterium smegmatis (strain ATCC 700084 / mc(2)155) (Mycobacterium smegmatis).